The chain runs to 137 residues: Basic phospholipase A2 homolog Ts-R6 (137 aa).

The N-terminal stretch at 1 to 16 (MRTLWIMAVLLLGVEG) is a signal peptide. Disulfide bonds link Cys-42/Cys-130, Cys-44/Cys-60, Cys-59/Cys-110, Cys-65/Cys-137, Cys-66/Cys-103, Cys-73/Cys-97, and Cys-91/Cys-101.

As to expression, expressed by the venom gland.

It localises to the secreted. Its function is as follows. Snake venom phospholipase A2 homolog that induces local edema a few hours after injection (5-10 ug) in the hind paw and shows weak anticoagulant and myotoxic activities. The protein is Basic phospholipase A2 homolog Ts-R6 of Trimeresurus stejnegeri (Chinese green tree viper).